A 221-amino-acid polypeptide reads, in one-letter code: Thiamine-phosphate synthase (221 aa).

Residues Q47–K51 and N79 each bind 4-amino-2-methyl-5-(diphosphooxymethyl)pyrimidine. Residues D80 and D99 each contribute to the Mg(2+) site. A 4-amino-2-methyl-5-(diphosphooxymethyl)pyrimidine-binding site is contributed by T118. Residue S144 to T146 coordinates 2-[(2R,5Z)-2-carboxy-4-methylthiazol-5(2H)-ylidene]ethyl phosphate. A 4-amino-2-methyl-5-(diphosphooxymethyl)pyrimidine-binding site is contributed by K147. 2-[(2R,5Z)-2-carboxy-4-methylthiazol-5(2H)-ylidene]ethyl phosphate is bound by residues G175 and V195 to T196.

It belongs to the thiamine-phosphate synthase family. Requires Mg(2+) as cofactor.

The catalysed reaction is 2-[(2R,5Z)-2-carboxy-4-methylthiazol-5(2H)-ylidene]ethyl phosphate + 4-amino-2-methyl-5-(diphosphooxymethyl)pyrimidine + 2 H(+) = thiamine phosphate + CO2 + diphosphate. It catalyses the reaction 2-(2-carboxy-4-methylthiazol-5-yl)ethyl phosphate + 4-amino-2-methyl-5-(diphosphooxymethyl)pyrimidine + 2 H(+) = thiamine phosphate + CO2 + diphosphate. It carries out the reaction 4-methyl-5-(2-phosphooxyethyl)-thiazole + 4-amino-2-methyl-5-(diphosphooxymethyl)pyrimidine + H(+) = thiamine phosphate + diphosphate. The protein operates within cofactor biosynthesis; thiamine diphosphate biosynthesis; thiamine phosphate from 4-amino-2-methyl-5-diphosphomethylpyrimidine and 4-methyl-5-(2-phosphoethyl)-thiazole: step 1/1. Condenses 4-methyl-5-(beta-hydroxyethyl)thiazole monophosphate (THZ-P) and 2-methyl-4-amino-5-hydroxymethyl pyrimidine pyrophosphate (HMP-PP) to form thiamine monophosphate (TMP). The sequence is that of Thiamine-phosphate synthase from Caldicellulosiruptor saccharolyticus (strain ATCC 43494 / DSM 8903 / Tp8T 6331).